We begin with the raw amino-acid sequence, 154 residues long: Myoglobin (154 aa).

Positions 2 to 148 (GLSDGEWQLV…FRNDIAAKYK (147 aa)) constitute a Globin domain. Ser4 is subject to Phosphoserine. His65 lines the nitrite pocket. His65 is a binding site for O2. A Phosphothreonine modification is found at Thr68. A heme b-binding site is contributed by His94.

The protein belongs to the globin family. As to quaternary structure, monomeric.

The protein localises to the cytoplasm. It is found in the sarcoplasm. It catalyses the reaction Fe(III)-heme b-[protein] + nitric oxide + H2O = Fe(II)-heme b-[protein] + nitrite + 2 H(+). It carries out the reaction H2O2 + AH2 = A + 2 H2O. Its function is as follows. Monomeric heme protein which primary function is to store oxygen and facilitate its diffusion within muscle tissues. Reversibly binds oxygen through a pentacoordinated heme iron and enables its timely and efficient release as needed during periods of heightened demand. Depending on the oxidative conditions of tissues and cells, and in addition to its ability to bind oxygen, it also has a nitrite reductase activity whereby it regulates the production of bioactive nitric oxide. Under stress conditions, like hypoxia and anoxia, it also protects cells against reactive oxygen species thanks to its pseudoperoxidase activity. The protein is Myoglobin (MB) of Tupaia glis (Common tree shrew).